The chain runs to 612 residues: Actin-binding LIM protein 2 (612 aa).

LIM zinc-binding domains follow at residues 22 to 81 (ILCN…LYGT), 81 to 141 (TRCF…TLLG), 151 to 210 (RSCG…KFGI), and 210 to 270 (IRCD…ARTE). The Zn(2+) site is built by Cys83, Cys86, His103, Cys106, Cys109, Cys112, Cys131, and Cys134. Positions 212, 215, 232, 235, 238, 241, 260, and 263 each coordinate Zn(2+). The span at 269–278 (TEDKSKETRT) shows a compositional bias: basic and acidic residues. 2 disordered regions span residues 269–295 (TEDK…SGSP) and 341–433 (AVGD…DNIY). The segment covering 279–295 (SSESIVSVPASSTSGSP) has biased composition (low complexity). Residues Ser282, Ser294, Gly351, Arg356, Ser365, and Ser368 each carry the phosphoserine modification. Positions 364-373 (SSPSSAGSVS) are enriched in low complexity. Residues 394–416 (SGRSTPSLSVHSDSRPPSSTYQQ) show a composition bias toward polar residues. Residue Ser453 is modified to Phosphoserine. Residues 471–498 (ADTRTNSPDLDSQSLSLSSGTDQEPLQR) are disordered. Thr473 is modified (phosphothreonine). Phosphoserine is present on residues Ser477 and Ser579. The segment covering 477–489 (SPDLDSQSLSLSS) has biased composition (low complexity). The region spanning 544–612 (TREYKIYPYD…NDLKKKALLF (69 aa)) is the HP domain.

In terms of assembly, interacts with F-actin and ABRA. In terms of tissue distribution, expressed in brain. Highly expressed in caudate/putamen, moderately expressed in the olfactory bulb. In the hippocampus, expressed in the CA1, CA2 and CA3 fields. In the cerebellum, expressed in Purkinje cells.

It localises to the cytoplasm. Functionally, may act as scaffold protein. May stimulate ABRA activity and ABRA-dependent SRF transcriptional activity. The protein is Actin-binding LIM protein 2 (Ablim2) of Mus musculus (Mouse).